Consider the following 433-residue polypeptide: Glucose-6-phosphate isomerase (433 aa).

The active-site Proton donor is Glu285. Active-site residues include His306 and Lys421.

This sequence belongs to the GPI family.

Its subcellular location is the cytoplasm. The catalysed reaction is alpha-D-glucose 6-phosphate = beta-D-fructose 6-phosphate. It participates in carbohydrate biosynthesis; gluconeogenesis. Its pathway is carbohydrate degradation; glycolysis; D-glyceraldehyde 3-phosphate and glycerone phosphate from D-glucose: step 2/4. Functionally, catalyzes the reversible isomerization of glucose-6-phosphate to fructose-6-phosphate. The chain is Glucose-6-phosphate isomerase from Mycoplasma mobile (strain ATCC 43663 / 163K / NCTC 11711) (Mesomycoplasma mobile).